Reading from the N-terminus, the 424-residue chain is Riboflavin biosynthesis protein RibBA (424 aa).

The segment at 1–204 is DHBP synthase; it reads MTRFDSIERA…IADLIAWRRK (204 aa). Residues 28–29, D33, 141–145, and E165 contribute to the D-ribulose 5-phosphate site; these read RE and RPGHT. A Mg(2+)-binding site is contributed by E29. H144 is a binding site for Mg(2+). A GTP cyclohydrolase II region spans residues 205–424; sequence HEKHVLRIAE…QNTAQPGTAL (220 aa). 259–263 is a GTP binding site; that stretch reads RVHSE. Residues C264, C275, and C277 each coordinate Zn(2+). Residues Q280, 303–305, and T325 each bind GTP; that span reads EGR. Residue D337 is the Proton acceptor; for GTP cyclohydrolase activity of the active site. The Nucleophile; for GTP cyclohydrolase activity role is filled by R339. Positions 360 and 365 each coordinate GTP.

It in the N-terminal section; belongs to the DHBP synthase family. This sequence in the C-terminal section; belongs to the GTP cyclohydrolase II family. It depends on Mg(2+) as a cofactor. Mn(2+) serves as cofactor. Requires Zn(2+) as cofactor.

The enzyme catalyses D-ribulose 5-phosphate = (2S)-2-hydroxy-3-oxobutyl phosphate + formate + H(+). It catalyses the reaction GTP + 4 H2O = 2,5-diamino-6-hydroxy-4-(5-phosphoribosylamino)-pyrimidine + formate + 2 phosphate + 3 H(+). The protein operates within cofactor biosynthesis; riboflavin biosynthesis; 2-hydroxy-3-oxobutyl phosphate from D-ribulose 5-phosphate: step 1/1. Its pathway is cofactor biosynthesis; riboflavin biosynthesis; 5-amino-6-(D-ribitylamino)uracil from GTP: step 1/4. Catalyzes the conversion of D-ribulose 5-phosphate to formate and 3,4-dihydroxy-2-butanone 4-phosphate. In terms of biological role, catalyzes the conversion of GTP to 2,5-diamino-6-ribosylamino-4(3H)-pyrimidinone 5'-phosphate (DARP), formate and pyrophosphate. This chain is Riboflavin biosynthesis protein RibBA, found in Rhodococcus erythropolis (strain PR4 / NBRC 100887).